The following is a 292-amino-acid chain: GTP cyclohydrolase FolE2 (292 aa).

The protein belongs to the GTP cyclohydrolase IV family.

The enzyme catalyses GTP + H2O = 7,8-dihydroneopterin 3'-triphosphate + formate + H(+). The protein operates within cofactor biosynthesis; 7,8-dihydroneopterin triphosphate biosynthesis; 7,8-dihydroneopterin triphosphate from GTP: step 1/1. Converts GTP to 7,8-dihydroneopterin triphosphate. The polypeptide is GTP cyclohydrolase FolE2 (Staphylococcus aureus (strain MRSA252)).